The chain runs to 208 residues: Small ribosomal subunit protein uS4 (208 aa).

Residues 30–51 are disordered; the sequence is KSSLEKRPYAPGQHGQRRSKIS. The region spanning 98–161 is the S4 RNA-binding domain; it reads RRLDNVVYRM…KNNPQVQRSI (64 aa).

This sequence belongs to the universal ribosomal protein uS4 family. As to quaternary structure, part of the 30S ribosomal subunit. Contacts protein S5. The interaction surface between S4 and S5 is involved in control of translational fidelity.

In terms of biological role, one of the primary rRNA binding proteins, it binds directly to 16S rRNA where it nucleates assembly of the body of the 30S subunit. Functionally, with S5 and S12 plays an important role in translational accuracy. The sequence is that of Small ribosomal subunit protein uS4 from Wolinella succinogenes (strain ATCC 29543 / DSM 1740 / CCUG 13145 / JCM 31913 / LMG 7466 / NCTC 11488 / FDC 602W) (Vibrio succinogenes).